The chain runs to 624 residues: Chaperone protein HtpG (624 aa).

Residues 1-341 (MAVKQFKAES…SPDLSLNISR (341 aa)) form an a; substrate-binding region. Residues 342–550 (ELLQHDRQLK…DGELSIEMEK (209 aa)) are b. The c stretch occupies residues 551-624 (VLKMMPDNNN…FANDVASLMK (74 aa)).

It belongs to the heat shock protein 90 family. As to quaternary structure, homodimer.

The protein resides in the cytoplasm. Molecular chaperone. Has ATPase activity. This Clostridium acetobutylicum (strain ATCC 824 / DSM 792 / JCM 1419 / IAM 19013 / LMG 5710 / NBRC 13948 / NRRL B-527 / VKM B-1787 / 2291 / W) protein is Chaperone protein HtpG.